Here is a 409-residue protein sequence, read N- to C-terminus: CUB domain-containing protein (409 aa).

An N-terminal signal peptide occupies residues 1-18; it reads MFLFSLTVLSALVLITES. Positions 154–229 are enriched in low complexity; sequence TEASTTAQET…TTAPTTAPAP (76 aa). The tract at residues 154-230 is disordered; it reads TEASTTAQET…TAPTTAPAPI (77 aa). A disulfide bond links Cys232 and Cys257. Positions 232 to 338 constitute a CUB domain; sequence CGGVLRGRGT…QEYVDYYYYD (107 aa). Positions 389 to 409 are disordered; it reads VQGAADSESEASASSESSDED. Residues 392–409 show a composition bias toward low complexity; sequence AADSESEASASSESSDED.

Component of the acid-insoluble and acid-soluble organic matrix of the aragonitic skeleton (at protein level).

It is found in the secreted. This Acropora millepora (Staghorn coral) protein is CUB domain-containing protein.